A 437-amino-acid chain; its full sequence is Enolase superfamily member DDB_G0284701 (437 aa).

The active-site Proton acceptor is Lys-217. 3 residues coordinate Mn(2+): Asp-251, Glu-279, and Asp-321. Asp-395 serves as the catalytic Proton donor.

The protein belongs to the mandelate racemase/muconate lactonizing enzyme family.

The sequence is that of Enolase superfamily member DDB_G0284701 from Dictyostelium discoideum (Social amoeba).